The following is a 292-amino-acid chain: Probable vesicular-fusion protein sec17 homolog (292 aa).

The protein belongs to the SNAP family.

It is found in the membrane. Its function is as follows. Required for vesicular transport between the endoplasmic reticulum and the Golgi apparatus. The chain is Probable vesicular-fusion protein sec17 homolog from Neurospora crassa (strain ATCC 24698 / 74-OR23-1A / CBS 708.71 / DSM 1257 / FGSC 987).